The sequence spans 1774 residues: U3 small nucleolar RNA-associated protein 10 (1774 aa).

Residues 1209 to 1228 (TEQGKSDGDESGSEPDNDNP) form a disordered region. The stretch at 1734–1772 (LVPVIAELLEDDDEEVEQEVRTGLVKVVETVLGEPFDRY) is one HEAT repeat.

This sequence belongs to the HEATR1/UTP10 family. Component of the ribosomal small subunit (SSU) processome.

The protein localises to the nucleus. It localises to the nucleolus. Functionally, involved in nucleolar processing of pre-18S ribosomal RNA. Involved in ribosome biosynthesis. This is U3 small nucleolar RNA-associated protein 10 from Eremothecium gossypii (strain ATCC 10895 / CBS 109.51 / FGSC 9923 / NRRL Y-1056) (Yeast).